An 88-amino-acid chain; its full sequence is Beta-insect excitatory toxin 1 (88 aa).

Positions Met-1–Gly-18 are cleaved as a signal peptide. In terms of domain architecture, LCN-type CS-alpha/beta spans Lys-20–Asp-83. 4 disulfide bridges follow: Cys-34-Cys-55, Cys-40-Cys-60, Cys-44-Cys-62, and Cys-56-Cys-82.

It belongs to the long (4 C-C) scorpion toxin superfamily. Sodium channel inhibitor family. Beta subfamily. In terms of tissue distribution, expressed by the venom gland.

It localises to the secreted. Excitatory insect beta-toxins induce a spastic paralysis. They bind voltage-independently at site-4 of sodium channels (Nav) and shift the voltage of activation toward more negative potentials thereby affecting sodium channel activation and promoting spontaneous and repetitive firing. This toxin is active only on insects. The sequence is that of Beta-insect excitatory toxin 1 from Androctonus australis (Sahara scorpion).